A 492-amino-acid chain; its full sequence is Pre-mRNA-processing factor 19 (492 aa).

Positions 1–72 constitute a U-box domain; it reads MSFVCGISGE…APRNVSGTSI (72 aa). WD repeat units follow at residues 207–246, 249–288, 291–330, 336–375, 378–417, and 461–491; these read HSTG…VMQT, GHNK…SKAI, VHQA…SLCK, GSQI…VAAA, GHTA…NLKT, and DHSG…RVFS.

Belongs to the WD repeat PRP19 family. Homotetramer. Component of the NTC complex (or PRP19-associated complex) which is associated with the spliceosome.

It localises to the nucleus. Its subcellular location is the nucleoplasm. It carries out the reaction S-ubiquitinyl-[E2 ubiquitin-conjugating enzyme]-L-cysteine + [acceptor protein]-L-lysine = [E2 ubiquitin-conjugating enzyme]-L-cysteine + N(6)-ubiquitinyl-[acceptor protein]-L-lysine.. It participates in protein modification; protein ubiquitination. Probable ubiquitin-protein ligase which is mainly involved pre-mRNA splicing and DNA repair. Core component of the NTC/Nineteen complex which is part of the spliceosome and participates in its assembly, its remodeling and is required for its activity. Together with emb-4, necessary for interaction of rnp-4, a probable exon junction complex component, with mRNAs and spliceosomal snRNAs. Plays a role in nuclear retention of unspliced mRNAs. The protein is Pre-mRNA-processing factor 19 (prp-19) of Caenorhabditis elegans.